We begin with the raw amino-acid sequence, 556 residues long: 2-succinyl-5-enolpyruvyl-6-hydroxy-3-cyclohexene-1-carboxylate synthase (556 aa).

It belongs to the TPP enzyme family. MenD subfamily. In terms of assembly, homodimer. Mg(2+) is required as a cofactor. Mn(2+) serves as cofactor. It depends on thiamine diphosphate as a cofactor.

It carries out the reaction isochorismate + 2-oxoglutarate + H(+) = 5-enolpyruvoyl-6-hydroxy-2-succinyl-cyclohex-3-ene-1-carboxylate + CO2. The protein operates within quinol/quinone metabolism; 1,4-dihydroxy-2-naphthoate biosynthesis; 1,4-dihydroxy-2-naphthoate from chorismate: step 2/7. It functions in the pathway quinol/quinone metabolism; menaquinone biosynthesis. Its function is as follows. Catalyzes the thiamine diphosphate-dependent decarboxylation of 2-oxoglutarate and the subsequent addition of the resulting succinic semialdehyde-thiamine pyrophosphate anion to isochorismate to yield 2-succinyl-5-enolpyruvyl-6-hydroxy-3-cyclohexene-1-carboxylate (SEPHCHC). The sequence is that of 2-succinyl-5-enolpyruvyl-6-hydroxy-3-cyclohexene-1-carboxylate synthase from Escherichia coli (strain UTI89 / UPEC).